A 329-amino-acid chain; its full sequence is Replication factor C small subunit 1 (329 aa).

Position 44-51 (44-51 (GPPGTGKT)) interacts with ATP.

The protein belongs to the activator 1 small subunits family. RfcS subfamily. Heteromultimer composed of small subunits (RfcS) and large subunits (RfcL).

Functionally, part of the RFC clamp loader complex which loads the PCNA sliding clamp onto DNA. In Pyrobaculum aerophilum (strain ATCC 51768 / DSM 7523 / JCM 9630 / CIP 104966 / NBRC 100827 / IM2), this protein is Replication factor C small subunit 1.